The primary structure comprises 264 residues: tRNA (guanine-N(1)-)-methyltransferase (264 aa).

S-adenosyl-L-methionine-binding positions include Gly113 and 133–138 (IGDYVL). The interval 244–264 (VQQAATPGGQRRPPWHRDSRA) is disordered.

This sequence belongs to the RNA methyltransferase TrmD family. As to quaternary structure, homodimer.

It is found in the cytoplasm. It carries out the reaction guanosine(37) in tRNA + S-adenosyl-L-methionine = N(1)-methylguanosine(37) in tRNA + S-adenosyl-L-homocysteine + H(+). Specifically methylates guanosine-37 in various tRNAs. This Frankia alni (strain DSM 45986 / CECT 9034 / ACN14a) protein is tRNA (guanine-N(1)-)-methyltransferase.